The primary structure comprises 186 residues: MDTLCLSHHFLIAMPDMEDSLFARAVVYMCDHGEQGAMGVIINHGADLTLDSLLGQIGLDGCRPDQVGLPVFVGGPVQSDRGFVLHEPIGNWQSSLTVTDNVALTTSRDVLAAVSHHEGPERLIVTLGYAGWEPGQLEHELAQNAWLTVPADMRIVFDLPVADRYDAAIRLLGIEPSALFGSAGHA.

It belongs to the UPF0301 (AlgH) family.

The sequence is that of UPF0301 protein LHK_02881 from Laribacter hongkongensis (strain HLHK9).